Here is a 143-residue protein sequence, read N- to C-terminus: Large ribosomal subunit protein uL11 (143 aa).

It belongs to the universal ribosomal protein uL11 family. In terms of assembly, part of the ribosomal stalk of the 50S ribosomal subunit. Interacts with L10 and the large rRNA to form the base of the stalk. L10 forms an elongated spine to which L12 dimers bind in a sequential fashion forming a multimeric L10(L12)X complex. In terms of processing, one or more lysine residues are methylated.

Its function is as follows. Forms part of the ribosomal stalk which helps the ribosome interact with GTP-bound translation factors. The polypeptide is Large ribosomal subunit protein uL11 (Psychrobacter cryohalolentis (strain ATCC BAA-1226 / DSM 17306 / VKM B-2378 / K5)).